We begin with the raw amino-acid sequence, 1710 residues long: Extracellular matrix protein A (1710 aa).

The N-terminal stretch at 1–22 (MKISIFILLLFISSMVIISVNA) is a signal peptide. Cys-rich CT repeat units follow at residues 43–70 (NRWS…CDDE), 71–94 (NACT…VDDK), 95–117 (NPCT…CDDK), 118–141 (NACT…CDDN), 142–165 (NPCT…VDDN), 166–189 (NPCT…VDDL), 190–213 (NPCT…VDDN), 214–237 (NKCT…CDDN), 238–261 (NACT…CDDK), 262–285 (NPCT…VDDN), 286–309 (NPCT…VDDN), 310–333 (NQCT…TDDN), 334–357 (NPCT…VDDN), 358–381 (NKCT…TDDN), 382–405 (NACT…CDDK), 406–429 (KACT…CDDN), 430–453 (NPCT…VDDN), 454–477 (NPCT…VDDN), 478–501 (NKCT…TDDN), 502–525 (NACT…CDDK), 526–549 (KACT…CDDN), 550–573 (NPCT…VDDN), 574–597 (NPCT…VDDN), 598–621 (NKCT…TDDN), 622–645 (NACT…CDDS), 646–669 (NPCT…VDDN), 670–693 (NPCT…VDDN), 694–717 (NKCT…TDDN), 718–741 (NACT…CDDK), 742–765 (KACT…CDDN), 766–789 (NPCT…VDDN), 790–813 (NPCT…VDDN), 814–837 (NKCT…TDDN), 838–861 (NACT…CDDN), 862–885 (NKCT…CDDS), 886–909 (NPCT…VDDN), 910–933 (NPCT…VDDN), 934–957 (NKCT…TDDN), 958–981 (NACT…TDDN), 982–1005 (NACT…CDDS), 1006–1029 (NPCT…VDDN), 1030–1053 (NPCT…VDDN), 1054–1077 (NKCT…TDDN), 1078–1101 (NACT…CDDS), 1102–1125 (NPCT…VDDN), 1126–1149 (NPCT…VDDN), 1150–1173 (NKCT…CDDN), 1174–1197 (NACT…CDDR), 1198–1221 (NPCT…TDDS), 1222–1245 (NKCT…CDDN), 1246–1269 (NACT…CDDK), 1270–1293 (NPCT…VDDN), 1294–1317 (DKCT…CDDN), 1318–1341 (NACT…CDDS), 1342–1365 (NPCT…VDDN), 1366–1389 (NPCT…VDDN), 1390–1413 (NKCT…CDDN), 1414–1437 (NPCT…VDDN), 1438–1461 (DACT…TDDN), 1462–1485 (NKCT…CDDG), 1486–1509 (NKCT…CPKP), 1511–1534 (DKCS…CTSD), 1558–1581 (NKCQ…CDDG), 1582–1606 (NACT…LPKN), 1608–1632 (NKCI…CECD), and 1658–1682 (NPKT…VITS). 2 N-linked (GlcNAc...) asparagine glycosylation sites follow: N150 and N151. N270 and N271 each carry an N-linked (GlcNAc...) asparagine glycan. The N-linked (GlcNAc...) asparagine glycan is linked to N415. N535 carries an N-linked (GlcNAc...) asparagine glycan. N-linked (GlcNAc...) asparagine glycosylation occurs at N655. N-linked (GlcNAc...) asparagine glycosylation is present at N751. 3 N-linked (GlcNAc...) asparagine glycosylation sites follow: N871, N894, and N895. Residue N1015 is glycosylated (N-linked (GlcNAc...) asparagine). N-linked (GlcNAc...) asparagine glycosylation is found at N1110 and N1111. The N-linked (GlcNAc...) asparagine glycan is linked to N1183. N1255 carries an N-linked (GlcNAc...) asparagine glycan. N1351 carries an N-linked (GlcNAc...) asparagine glycan. N1530 carries an N-linked (GlcNAc...) asparagine glycan. N-linked (GlcNAc...) asparagine glycosylation occurs at N1624.

Its subcellular location is the secreted. This chain is Extracellular matrix protein A (ecmA), found in Dictyostelium discoideum (Social amoeba).